The following is a 324-amino-acid chain: Beta-ketoacyl-[acyl-carrier-protein] synthase III (324 aa).

Active-site residues include Cys112 and His249. The segment at Gln250–Arg254 is ACP-binding. Residue Asn279 is part of the active site.

It belongs to the thiolase-like superfamily. FabH family. Homodimer.

It localises to the cytoplasm. It catalyses the reaction malonyl-[ACP] + acetyl-CoA + H(+) = 3-oxobutanoyl-[ACP] + CO2 + CoA. It participates in lipid metabolism; fatty acid biosynthesis. Functionally, catalyzes the condensation reaction of fatty acid synthesis by the addition to an acyl acceptor of two carbons from malonyl-ACP. Catalyzes the first condensation reaction which initiates fatty acid synthesis and may therefore play a role in governing the total rate of fatty acid production. Possesses both acetoacetyl-ACP synthase and acetyl transacylase activities. Its substrate specificity determines the biosynthesis of branched-chain and/or straight-chain of fatty acids. This Streptococcus pyogenes serotype M4 (strain MGAS10750) protein is Beta-ketoacyl-[acyl-carrier-protein] synthase III.